Here is a 115-residue protein sequence, read N- to C-terminus: Ig heavy chain V-III region J606 (115 aa).

The Ig-like domain maps to E1 to S114. A disulfide bond links C22 and C98.

This Mus musculus (Mouse) protein is Ig heavy chain V-III region J606.